We begin with the raw amino-acid sequence, 294 residues long: Lycopene elongase/hydratase (294 aa).

The next 8 helical transmembrane spans lie at 31 to 51 (FWLYLGGPVIVGVSYAADGPG), 53 to 73 (LFSPLAIALFLYFTIPGNVFL), 115 to 135 (LALLFALVLPTLGIVALLAWM), 160 to 180 (GLYILPGVIGYAAIEGVAPPA), 182 to 202 (AVVGAWLWAMGMHTFSAIPDI), 222 to 242 (TYYYCVMCWLMAAFVFNFTHW), 243 to 263 (VFGVLLLVYPGLVFGILGVGV), and 274 to 294 (AINTVVGMVFTLIALWVMLYG).

This sequence belongs to the UbiA prenyltransferase family.

The protein resides in the cell membrane. The catalysed reaction is all-trans-lycopene + dimethylallyl diphosphate + H2O = dihydroisopentenyldehydrorhodopin + diphosphate. The enzyme catalyses isopentenyldehydrorhodopin + dimethylallyl diphosphate + H2O = dihydrobisanhydrobacterioruberin + diphosphate. It functions in the pathway carotenoid biosynthesis. In terms of biological role, involved in the biosynthesis of the acyclic C50 carotenoid bacterioruberin (BR). Acts as a bifunctional elongase/hydratase that catalyzes the elongation of lycopene by attaching a C(5) isoprene unit at C-2, as well as the hydroxylation of the previous end of the molecule. The enzyme acts at both ends of the substrate, and catalyzes the conversion of lycopene to the C(45) intermediate dihydroisopentenyldehydrorhodopin (DH-IDR) and the conversion of isopentenyldehydrorhodopin (IDR) to the C(50) carotenoid dihydrobisanhydrobacterioruberin (DH-BABR). Can also catalyze the conversion of lycopene to tetrahydrobisanhydrobacterioruberin (TH-BABR). The sequence is that of Lycopene elongase/hydratase from Haloarcula japonica (strain ATCC 49778 / DSM 6131 / JCM 7785 / NBRC 101032 / NCIMB 13157 / TR-1).